The following is a 691-amino-acid chain: 1,4-alpha-glucan-branching enzyme (691 aa).

The (1,4-alpha-D-glucosyl)n site is built by tryptophan 80 and lysine 116. Aspartate 333 acts as the Nucleophile in catalysis. Glutamate 398 (proton donor) is an active-site residue.

This sequence belongs to the glycosyl hydrolase 13 family. GlgB subfamily.

The protein localises to the cytoplasm. The enzyme catalyses Transfers a segment of a (1-&gt;4)-alpha-D-glucan chain to a primary hydroxy group in a similar glucan chain.. The protein operates within glycan biosynthesis; glycogen biosynthesis. Functionally, glycogen-branching enzyme participates in the glycogen biosynthetic process along with glycogenin and glycogen synthase. Generates alpha-1,6-glucosidic branches from alpha-1,4-linked glucose chains, to increase solubility of the glycogen polymer. In Yarrowia lipolytica (strain CLIB 122 / E 150) (Yeast), this protein is 1,4-alpha-glucan-branching enzyme (GLC3).